Here is a 1279-residue protein sequence, read N- to C-terminus: Sterol regulatory element-binding protein cleavage-activating protein (1279 aa).

Residues 1 to 18 lie on the Cytoplasmic side of the membrane; it reads MTLTERLREKISQAFYNH. Residues 19–39 form a helical membrane-spanning segment; that stretch reads GLLCASYPIPIILFTGLCILA. The Lumenal segment spans residues 40–279; that stretch reads CCYPLLKLPL…SLVHVHFKEE (240 aa). The interval 46 to 284 is loop-1; it reads KLPLPGTGPV…HFKEEIGIAE (239 aa). A disordered region spans residues 60 to 81; the sequence is PVKDYSPPPSASDHKPGEPSEQ. A glycan (N-linked (GlcNAc...) asparagine) is linked at Asn263. The helical transmembrane segment at 280–300 threads the bilayer; sequence IGIAELIPLVTTYIILFAYIY. An SSD domain is found at 284–442; that stretch reads ELIPLVTTYI…MPFFTTVLSI (159 aa). Over 301–312 the chain is Cytoplasmic; sequence FSTRKIDMVKSK. Residues 313–333 traverse the membrane as a helical segment; the sequence is WGLALAAVVTVLSSLLMSVGL. At 334 to 344 the chain is on the lumenal side; that stretch reads CTLFGLTPTLN. A helical membrane pass occupies residues 345–365; that stretch reads GGEIFPYLVVVIGLENVLVLT. Over 366–401 the chain is Cytoplasmic; that stretch reads KSVVSTPVDLEVKLRIAQGLSSESWSIMKNMATELG. Residues 402 to 422 traverse the membrane as a helical segment; the sequence is IILIGYFTLVPAIQEFCLFAV. A topological domain (lumenal) is located at residue Val423. Residues 424-444 traverse the membrane as a helical segment; that stretch reads GLVSDFFLQMPFFTTVLSIDI. The Cytoplasmic portion of the chain corresponds to 445 to 518; sequence RRMELADLNK…FLARTRLAQR (74 aa). The ER export signal signature appears at 447–452; sequence MELADL. Glycyl lysine isopeptide (Lys-Gly) (interchain with G-Cter in ubiquitin) cross-links involve residues Lys454 and Lys466. Residues 519–539 form a helical membrane-spanning segment; that stretch reads LIMAGTVVWIGILAYTDPAGL. Residues 535–710 are loop-7; sequence DPAGLRTYLA…QAHRDVTLYK (176 aa). Over 540-707 the chain is Lumenal; the sequence is RTYLAAQVTE…GVAQAHRDVT (168 aa). The segment at 588-617 is disordered; it reads LENQTLPGEPPEPGGQAEGVHDSPAPEVTW. 2 N-linked (GlcNAc...) asparagine glycosylation sites follow: Asn590 and Asn641. The disordered stretch occupies residues 668–696; that stretch reads EGRHPQDSRSAWSPPQPAQGGLWDAGPKG. Residues 708 to 728 traverse the membrane as a helical segment; that stretch reads LYKVAALGLATGILLVLLLCL. At 729-1279 the chain is on the cytoplasmic side; that stretch reads YRVLCPRNYG…YVPSVLEKLD (551 aa). Positions 730-1279 are interaction with SREBF2; sequence RVLCPRNYGQ…YVPSVLEKLD (550 aa). Residues 770-810 form a WD 1 repeat; the sequence is VLRGHLMDIECLASDGMLLVSCCLAGHVCVWDAQTGDCLTR. Ser821, Ser837, Ser843, and Ser850 each carry phosphoserine. 3 disordered regions span residues 834 to 868, 883 to 903, and 925 to 959; these read ERLS…LFGD, HPRL…CRRT, and VPMH…GSPS. Residues 885 to 896 are compositionally biased toward basic and acidic residues; that stretch reads RLPELDHPEPRH. Residues 929-944 are compositionally biased toward pro residues; it reads TPAPRPPSPGPTPPQT. Ser936 is subject to Phosphoserine. WD repeat units lie at residues 952–1002 and 1005–1042; these read PPEK…LRCS and EVAS…ALSP. An Omega-N-methylarginine modification is found at Arg1051. WD repeat units lie at residues 1077-1114, 1117-1155, 1158-1195, and 1197-1235; these read AHQK…CLFT, GHSG…RVSH, AHRG…KLYS, and QQDL…LLQT.

It belongs to the WD repeat SCAP family. Membrane region forms a homotetramer. Component of the SCAP-SREBP complex (composed of SCAP and SREBF1/SREBP1 or SREBF2/SREBP2); interacts with SREBF1/SREBP1 or SREBF2/SREBP2 through its C-terminal cytoplasmic domain. Forms a ternary complex with INSIG1 or INSIG2 through its transmembrane domains at high sterol concentrations. Interacts with PAQR3; the interaction anchors the SCAP-SREBP complex to the Golgi apparatus in low cholesterol conditions. Interacts with the SEC23-SEC24 complex in a SAR1-GTP-dependent manner through an ER export signal in its third cytoplasmic loop. Interacts with RNF139; the interaction inhibits the interaction of SCAP with SEC24B and hampering the ER to Golgi transport of the SCAP-SREBP complex. Interacts with SPRING1. Ubiquitinated at Lys-454 and Lys-466. RNF145 triggers ubiquitination of SCAP, likely inhibiting SCAP-SREBP complex transport to the Golgi apparatus and the subsequent processing/maturation of SREBF2/SREBP2. Widely expressed with higher levels in lung, kidney, gut, brain and adipose tissue. As to expression, expressed in liver and muscle. Isoform 3 expressed in testis. In terms of tissue distribution, expressed in testis.

The protein localises to the endoplasmic reticulum membrane. Its subcellular location is the golgi apparatus membrane. It is found in the cytoplasmic vesicle. It localises to the COPII-coated vesicle membrane. Its function is as follows. Escort protein required for cholesterol as well as lipid homeostasis. Regulates export of the SCAP-SREBP complex from the endoplasmic reticulum to the Golgi upon low cholesterol, thereby regulating the processing of sterol regulatory element-binding proteins (SREBPs) SREBF1/SREBP1 and SREBF2/SREBP2. At high sterol concentrations, formation of a ternary complex with INSIG (INSIG1 or INSIG2) leads to mask the ER export signal in SCAP, promoting retention of the complex in the endoplasmic reticulum. Low sterol concentrations trigger release of INSIG, a conformational change in the SSD domain of SCAP, unmasking of the ER export signal, promoting recruitment into COPII-coated vesicles and transport of the SCAP-SREBP to the Golgi: in the Golgi, SREBPs are then processed, releasing the transcription factor fragment of SREBPs from the membrane, its import into the nucleus and up-regulation of LDLR, INSIG1 and the mevalonate pathway. Binds cholesterol via its SSD domain. The polypeptide is Sterol regulatory element-binding protein cleavage-activating protein (Sus scrofa (Pig)).